Reading from the N-terminus, the 362-residue chain is Phosphoserine aminotransferase (362 aa).

L-glutamate-binding residues include serine 9 and arginine 42. Pyridoxal 5'-phosphate-binding positions include 76–77 (GR), tryptophan 102, threonine 153, aspartate 174, and glutamine 197. Lysine 198 is modified (N6-(pyridoxal phosphate)lysine). Residue 239-240 (NT) coordinates pyridoxal 5'-phosphate.

This sequence belongs to the class-V pyridoxal-phosphate-dependent aminotransferase family. SerC subfamily. Homodimer. The cofactor is pyridoxal 5'-phosphate.

It localises to the cytoplasm. The catalysed reaction is O-phospho-L-serine + 2-oxoglutarate = 3-phosphooxypyruvate + L-glutamate. It carries out the reaction 4-(phosphooxy)-L-threonine + 2-oxoglutarate = (R)-3-hydroxy-2-oxo-4-phosphooxybutanoate + L-glutamate. The protein operates within amino-acid biosynthesis; L-serine biosynthesis; L-serine from 3-phospho-D-glycerate: step 2/3. It participates in cofactor biosynthesis; pyridoxine 5'-phosphate biosynthesis; pyridoxine 5'-phosphate from D-erythrose 4-phosphate: step 3/5. Its function is as follows. Catalyzes the reversible conversion of 3-phosphohydroxypyruvate to phosphoserine and of 3-hydroxy-2-oxo-4-phosphonooxybutanoate to phosphohydroxythreonine. The chain is Phosphoserine aminotransferase from Escherichia coli O7:K1 (strain IAI39 / ExPEC).